Reading from the N-terminus, the 431-residue chain is 4-hydroxy-3-methylbut-2-en-1-yl diphosphate synthase (flavodoxin) (431 aa).

Residues C310, C313, C356, and E363 each contribute to the [4Fe-4S] cluster site.

This sequence belongs to the IspG family. Requires [4Fe-4S] cluster as cofactor.

It catalyses the reaction (2E)-4-hydroxy-3-methylbut-2-enyl diphosphate + oxidized [flavodoxin] + H2O + 2 H(+) = 2-C-methyl-D-erythritol 2,4-cyclic diphosphate + reduced [flavodoxin]. Its pathway is isoprenoid biosynthesis; isopentenyl diphosphate biosynthesis via DXP pathway; isopentenyl diphosphate from 1-deoxy-D-xylulose 5-phosphate: step 5/6. Its function is as follows. Converts 2C-methyl-D-erythritol 2,4-cyclodiphosphate (ME-2,4cPP) into 1-hydroxy-2-methyl-2-(E)-butenyl 4-diphosphate. This is 4-hydroxy-3-methylbut-2-en-1-yl diphosphate synthase (flavodoxin) from Rhodopseudomonas palustris (strain HaA2).